Consider the following 83-residue polypeptide: Exodeoxyribonuclease 7 small subunit (83 aa).

Belongs to the XseB family. Heterooligomer composed of large and small subunits.

The protein localises to the cytoplasm. The enzyme catalyses Exonucleolytic cleavage in either 5'- to 3'- or 3'- to 5'-direction to yield nucleoside 5'-phosphates.. Its function is as follows. Bidirectionally degrades single-stranded DNA into large acid-insoluble oligonucleotides, which are then degraded further into small acid-soluble oligonucleotides. The chain is Exodeoxyribonuclease 7 small subunit from Bradyrhizobium sp. (strain ORS 278).